A 263-amino-acid chain; its full sequence is Putative hydro-lyase GK2103 (263 aa).

It belongs to the D-glutamate cyclase family.

The chain is Putative hydro-lyase GK2103 from Geobacillus kaustophilus (strain HTA426).